The following is a 267-amino-acid chain: Coiled-coil domain-containing protein 172 (267 aa).

Coiled-coil stretches lie at residues 24–97 (MREV…CEAI) and 128–191 (LMKE…EETE).

The protein belongs to the CCDC172 family. May interact with TEKT2.

It is found in the cytoplasm. The protein resides in the cell projection. The protein localises to the cilium. The polypeptide is Coiled-coil domain-containing protein 172 (Ccdc172) (Mus musculus (Mouse)).